The sequence spans 92 residues: Small ribosomal subunit protein uS19 (92 aa).

The protein belongs to the universal ribosomal protein uS19 family.

Protein S19 forms a complex with S13 that binds strongly to the 16S ribosomal RNA. This chain is Small ribosomal subunit protein uS19, found in Vibrio atlanticus (strain LGP32) (Vibrio splendidus (strain Mel32)).